The chain runs to 126 residues: E3 ubiquitin-protein ligase PPP1R11 (126 aa).

The tract at residues 1-25 (MAEAGAGLSETVTETTVTVTTEPEN) is disordered. Ala2 carries the N-acetylalanine modification. Residues 10-22 (ETVTETTVTVTTE) show a composition bias toward low complexity. The atypical RING finger domain 1 stretch occupies residues 52-62 (HMGRRSSKCCC). The segment at 70–126 (FGESSTESDEEEEEGCGHTHCVRGHRKGRRRATLGPTPTTPPQPPDPSQPPPGPMQH) is disordered. 2 positions are modified to phosphoserine: Ser73 and Ser74. Thr75 carries the post-translational modification Phosphothreonine. Residue Ser77 is modified to Phosphoserine. The segment at 85–94 (CGHTHCVRGH) is atypical RING finger domain 2. Residues 89–101 (HCVRGHRKGRRRA) are compositionally biased toward basic residues. Pro residues predominate over residues 107–126 (PTTPPQPPDPSQPPPGPMQH). Thr109 is subject to Phosphothreonine.

Interacts with TLR2 and UBE2D2. In terms of processing, auto-ubiquitinated. Widely expressed.

The enzyme catalyses S-ubiquitinyl-[E2 ubiquitin-conjugating enzyme]-L-cysteine + [acceptor protein]-L-lysine = [E2 ubiquitin-conjugating enzyme]-L-cysteine + N(6)-ubiquitinyl-[acceptor protein]-L-lysine.. It participates in protein modification; protein ubiquitination. Functionally, atypical E3 ubiquitin-protein ligase which ubiquitinates TLR2 at 'Lys-754' leading to its degradation by the proteasome. Plays a role in regulating inflammatory cytokine release and gram-positive bacterial clearance by functioning, in part, through the ubiquitination and degradation of TLR2. Inhibitor of protein phosphatase 1. The sequence is that of E3 ubiquitin-protein ligase PPP1R11 (PPP1R11) from Homo sapiens (Human).